The primary structure comprises 147 residues: Hemoglobin subunit delta (147 aa).

The Globin domain maps to 3–147; sequence HLTPEEKALV…VANALAHKYH (145 aa). Serine 51 is modified (phosphoserine). Residues histidine 64 and histidine 93 each coordinate heme b.

This sequence belongs to the globin family. As to quaternary structure, heterotetramer of two delta chains and two alpha chains. Red blood cells.

The polypeptide is Hemoglobin subunit delta (HBD) (Trichechus manatus (Caribbean manatee)).